The following is a 255-amino-acid chain: 4-hydroxy-tetrahydrodipicolinate reductase (255 aa).

NAD(+)-binding positions include 9 to 14 (GFKGKM), 89 to 91 (GTT), and 115 to 118 (APNF). H145 (proton donor/acceptor) is an active-site residue. H146 lines the (S)-2,3,4,5-tetrahydrodipicolinate pocket. K149 acts as the Proton donor in catalysis. 155–156 (GT) is a binding site for (S)-2,3,4,5-tetrahydrodipicolinate.

Belongs to the DapB family.

The protein localises to the cytoplasm. It catalyses the reaction (S)-2,3,4,5-tetrahydrodipicolinate + NAD(+) + H2O = (2S,4S)-4-hydroxy-2,3,4,5-tetrahydrodipicolinate + NADH + H(+). The enzyme catalyses (S)-2,3,4,5-tetrahydrodipicolinate + NADP(+) + H2O = (2S,4S)-4-hydroxy-2,3,4,5-tetrahydrodipicolinate + NADPH + H(+). Its pathway is amino-acid biosynthesis; L-lysine biosynthesis via DAP pathway; (S)-tetrahydrodipicolinate from L-aspartate: step 4/4. Its function is as follows. Catalyzes the conversion of 4-hydroxy-tetrahydrodipicolinate (HTPA) to tetrahydrodipicolinate. The polypeptide is 4-hydroxy-tetrahydrodipicolinate reductase (Streptococcus suis (strain 98HAH33)).